The primary structure comprises 525 residues: GMP synthase [glutamine-hydrolyzing] (525 aa).

The Glutamine amidotransferase type-1 domain maps to 9–207 (RILILDFGSQ…VRDICQCEAL (199 aa)). Cysteine 86 serves as the catalytic Nucleophile. Catalysis depends on residues histidine 181 and glutamate 183. Residues 208 to 400 (WTPAKIIDDA…LGLPYDMLYR (193 aa)) form the GMPS ATP-PPase domain. 235–241 (SGGVDSS) contributes to the ATP binding site.

As to quaternary structure, homodimer.

It catalyses the reaction XMP + L-glutamine + ATP + H2O = GMP + L-glutamate + AMP + diphosphate + 2 H(+). It participates in purine metabolism; GMP biosynthesis; GMP from XMP (L-Gln route): step 1/1. Catalyzes the synthesis of GMP from XMP. The sequence is that of GMP synthase [glutamine-hydrolyzing] from Escherichia coli O127:H6 (strain E2348/69 / EPEC).